Consider the following 81-residue polypeptide: Small ribosomal subunit protein bS18 (81 aa).

Belongs to the bacterial ribosomal protein bS18 family. In terms of assembly, part of the 30S ribosomal subunit. Forms a tight heterodimer with protein bS6.

Functionally, binds as a heterodimer with protein bS6 to the central domain of the 16S rRNA, where it helps stabilize the platform of the 30S subunit. This Lactococcus lactis subsp. cremoris (strain MG1363) protein is Small ribosomal subunit protein bS18.